Consider the following 360-residue polypeptide: Peptide chain release factor 1 (360 aa).

An N5-methylglutamine modification is found at glutamine 235. The interval 284–312 (AKRQQAEASTRRNLLGSGDRSDRNRTYNF) is disordered.

Belongs to the prokaryotic/mitochondrial release factor family. Post-translationally, methylated by PrmC. Methylation increases the termination efficiency of RF1.

It is found in the cytoplasm. In terms of biological role, peptide chain release factor 1 directs the termination of translation in response to the peptide chain termination codons UAG and UAA. In Escherichia coli O81 (strain ED1a), this protein is Peptide chain release factor 1.